The sequence spans 373 residues: ATP phosphoribosyltransferase regulatory subunit (373 aa).

Belongs to the class-II aminoacyl-tRNA synthetase family. HisZ subfamily. Heteromultimer composed of HisG and HisZ subunits.

It is found in the cytoplasm. It functions in the pathway amino-acid biosynthesis; L-histidine biosynthesis; L-histidine from 5-phospho-alpha-D-ribose 1-diphosphate: step 1/9. Its function is as follows. Required for the first step of histidine biosynthesis. May allow the feedback regulation of ATP phosphoribosyltransferase activity by histidine. In Chelativorans sp. (strain BNC1), this protein is ATP phosphoribosyltransferase regulatory subunit.